A 518-amino-acid chain; its full sequence is Sensor protein kinase HptS (518 aa).

Helical transmembrane passes span Ile-20 to Trp-40 and Gly-222 to Ile-242. Residues Glu-297 to Arg-513 enclose the Histidine kinase domain. His-325 bears the Phosphohistidine; by autocatalysis mark.

In terms of processing, autophosphorylated.

The protein resides in the cell membrane. It catalyses the reaction ATP + protein L-histidine = ADP + protein N-phospho-L-histidine.. In terms of biological role, member of the two-component regulatory system HptS/HptR that regulates genes involved in hexose phosphate transport system in response to changes in extracellular phosphate sources. May act as a sensor protein kinase which is autophosphorylated at a histidine residue and transfers its phosphate group to the conserved aspartic acid residue in the regulatory domain of HptS. In turn, HptS antagonizes CcpA-dependent transcription of a subset of CcpA-regulated genes involved in antibiotic susceptibility. The chain is Sensor protein kinase HptS (hptS) from Staphylococcus aureus (strain USA300).